A 591-amino-acid polypeptide reads, in one-letter code: Potassium channel KAT4 (591 aa).

Topologically, residues 1–32 (MAARSELLRPAFGEASPSLGRFVINPHSCSYR) are cytoplasmic. A helical transmembrane segment spans residues 33 to 53 (WWHMFLIMLVLYSAWASPFEL). Residues 54–63 (SMEKAASIAL) lie on the Extracellular side of the membrane. Residues 64 to 84 (VVTDLVVDVFFAIDIALSFFV) form a helical membrane-spanning segment. At 85 to 109 (AYRDTSTGLLITDRRKITMRYLKRP) the chain is on the cytoplasmic side. The chain crosses the membrane as a helical span at residues 110-130 (CFALDVASTIPLQIIYQLVTG). Topologically, residues 131 to 137 (KRQGLWG) are extracellular. Residues 138–158 (LLNLLRLWRLRRVSKLFARVE) form a helical; Voltage-sensor membrane-spanning segment. At 159 to 172 (KDIRFNYLWTRLIK) the chain is on the cytoplasmic side. A helical membrane pass occupies residues 173 to 193 (LLCVTLFALHFAACIYLWMAF). The Extracellular portion of the chain corresponds to 194–220 (NYKIKELTWIGSQIHSFEDRSVWFCYT). The segment at residues 221–240 (CAVYWSITTLATVGYGDLHA) is an intramembrane region (pore-forming). Over 241-246 (TNIGEM) the chain is Extracellular. Residues 247 to 267 (LFSIAFMLFNMGLTSYIIGNI) traverse the membrane as a helical segment. Over 268–591 (TNLVVRETSN…IRDGDHLLFS (324 aa)) the chain is Cytoplasmic. 349–469 (LFQGVSDSLI…YIVFSNFIQY (121 aa)) lines the a nucleoside 3',5'-cyclic phosphate pocket. The KHA domain maps to 521–591 (RVVIHEQLPN…IRDGDHLLFS (71 aa)).

This sequence belongs to the potassium channel family. Plant (TC 1.A.1.4) subfamily.

It localises to the membrane. Probable inward-rectifying potassium channel. Assuming opened or closed conformations in response to the voltage difference across the membrane, the channel is activated by hyperpolarization. The chain is Potassium channel KAT4 from Oryza sativa subsp. japonica (Rice).